The following is a 270-amino-acid chain: 3-methyl-2-oxobutanoate hydroxymethyltransferase (270 aa).

2 residues coordinate Mg(2+): aspartate 50 and aspartate 89. 3-methyl-2-oxobutanoate is bound by residues 50 to 51 (DS), aspartate 89, and lysine 118. Glutamate 120 contacts Mg(2+). Glutamate 187 functions as the Proton acceptor in the catalytic mechanism.

The protein belongs to the PanB family. In terms of assembly, homodecamer; pentamer of dimers. The cofactor is Mg(2+).

The protein resides in the cytoplasm. It carries out the reaction 3-methyl-2-oxobutanoate + (6R)-5,10-methylene-5,6,7,8-tetrahydrofolate + H2O = 2-dehydropantoate + (6S)-5,6,7,8-tetrahydrofolate. Its pathway is cofactor biosynthesis; (R)-pantothenate biosynthesis; (R)-pantoate from 3-methyl-2-oxobutanoate: step 1/2. Functionally, catalyzes the reversible reaction in which hydroxymethyl group from 5,10-methylenetetrahydrofolate is transferred onto alpha-ketoisovalerate to form ketopantoate. This is 3-methyl-2-oxobutanoate hydroxymethyltransferase from Helicobacter pylori (strain G27).